The chain runs to 72 residues: Toxin Acra II-2 (72 aa).

The region spanning 3-67 (VPGNYPLNTN…VWNAAKNYCK (65 aa)) is the LCN-type CS-alpha/beta domain. Intrachain disulfides connect cysteine 18-cysteine 41, cysteine 27-cysteine 46, and cysteine 31-cysteine 48.

This sequence belongs to the long (3 C-C) scorpion toxin superfamily. Sodium channel inhibitor family. Beta subfamily. As to expression, expressed by the venom gland.

The protein resides in the secreted. Its function is as follows. Binds to sodium channels (Nav) and affects the channel activation process. This is Toxin Acra II-2 from Androctonus crassicauda (Arabian fat-tailed scorpion).